The primary structure comprises 388 residues: MRYLTAGESHGQALTAIIEGIPAGLALSAELINKELKRRQGGYGRGARMRIESDRVHISSGVRHGKTTGAPITLTIQNKDHQKWLDIMAVEAVEEQIKFKRKITRPRPGHADLVGGIKYRFDDLRNALERSSARETAMRVAVGAIAKAILTELGIETANHVLVFGGIEVAVPEAMSFADIKKVAESSDLSIVNPKQEATIKAHIDQVKKEGDTLGGIIETLIHGLPAGLGSYVQWDRKLDAKIAQAVLSINAFKGVEFGMGFDMGYQKGSQVMDDIIWHETSGYSRRTNRLGGFEAGMTTGQPIVVKGVMKPIPTLYKPLMSVDTETHEPYKATVERSDPTALPAAGVVMENVVATVITKEILEQFPSDNMTDLKQAFFAYRDYVHHF.

Residues R39 and R45 each contribute to the NADP(+) site. Residues 130-132, 251-252, A296, 311-315, and R337 each bind FMN; these read RSS, NA, and KPIPT.

This sequence belongs to the chorismate synthase family. In terms of assembly, homotetramer. It depends on FMNH2 as a cofactor.

The enzyme catalyses 5-O-(1-carboxyvinyl)-3-phosphoshikimate = chorismate + phosphate. Its pathway is metabolic intermediate biosynthesis; chorismate biosynthesis; chorismate from D-erythrose 4-phosphate and phosphoenolpyruvate: step 7/7. Functionally, catalyzes the anti-1,4-elimination of the C-3 phosphate and the C-6 proR hydrogen from 5-enolpyruvylshikimate-3-phosphate (EPSP) to yield chorismate, which is the branch point compound that serves as the starting substrate for the three terminal pathways of aromatic amino acid biosynthesis. This reaction introduces a second double bond into the aromatic ring system. The sequence is that of Chorismate synthase from Streptococcus equi subsp. equi (strain 4047).